We begin with the raw amino-acid sequence, 215 residues long: Small ribosomal subunit protein uS3c (215 aa).

The 74-residue stretch at 43–116 (IKNYIKKNMK…KLNMAITRIA (74 aa)) folds into the KH type-2 domain.

This sequence belongs to the universal ribosomal protein uS3 family. As to quaternary structure, part of the 30S ribosomal subunit.

It localises to the plastid. The protein localises to the chloroplast. The protein is Small ribosomal subunit protein uS3c (rps3) of Morus indica (Mulberry).